Here is an 88-residue protein sequence, read N- to C-terminus: Putative septation protein SpoVG (88 aa).

Belongs to the SpoVG family.

Functionally, could be involved in septation. The chain is Putative septation protein SpoVG from Caldicellulosiruptor bescii (strain ATCC BAA-1888 / DSM 6725 / KCTC 15123 / Z-1320) (Anaerocellum thermophilum).